The following is a 290-amino-acid chain: Malonyl-[acyl-carrier protein] O-methyltransferase (290 aa).

The protein belongs to the methyltransferase superfamily.

The catalysed reaction is malonyl-[ACP] + S-adenosyl-L-methionine = malonyl-[ACP] methyl ester + S-adenosyl-L-homocysteine. The protein operates within cofactor biosynthesis; biotin biosynthesis. In terms of biological role, converts the free carboxyl group of a malonyl-thioester to its methyl ester by transfer of a methyl group from S-adenosyl-L-methionine (SAM). It allows to synthesize pimeloyl-ACP via the fatty acid synthetic pathway. This chain is Malonyl-[acyl-carrier protein] O-methyltransferase, found in Gallionella capsiferriformans (strain ES-2) (Gallionella ferruginea capsiferriformans (strain ES-2)).